The sequence spans 360 residues: Decorin (360 aa).

Positions 1–16 are cleaved as a signal peptide; the sequence is MTATLILLLLAQVSWA. Positions 17–30 are excised as a propeptide; the sequence is GPFQQRGLFDFMLE. O-linked (Xyl...) (glycosaminoglycan) serine glycosylation is present at serine 34. Cystine bridges form between cysteine 55/cysteine 61 and cysteine 59/cysteine 68. 12 LRR repeats span residues 74-94, 95-118, 119-142, 143-163, 164-187, 188-213, 214-234, 235-258, 259-282, 283-305, 306-335, and 336-360; these read DKVPKDLPPDTTLLDLQNNKI, TEIKDGDFKNLKNLHALILVNNKI, SKISPGAFTPLVKLERLYLSKNHL, KELPEKMPKSLQELRAHENEI, TKVRKSVFSGMNQMIVIELGTNPL, KSSGIENGAFQGMKKLSYIRIADTNI, TTIPQGLPPSLTELHLDGNKI, TKIDASSLKGLNNLAKLGLSFNDI, SAVDNGSLANAPHLRELHLDNNKL, IRVPGGLADHKYIQVVYLHNNNI, SVVGANDFCPPGYNTKKASYSGVSLFSNPV, and QYWEIQPSTFRCVYMRSAIQLGNYK. A glycan (N-linked (GlcNAc...) asparagine) is linked at asparagine 212. Residues asparagine 263 and asparagine 304 are each glycosylated (N-linked (GlcNAc...) asparagine). Cysteine 314 and cysteine 347 are joined by a disulfide.

The protein belongs to the small leucine-rich proteoglycan (SLRP) family. SLRP class I subfamily. As to quaternary structure, binds to type I and type II collagen, fibronectin and TGF-beta. Forms a ternary complex with MFAP2 and ELN. Interacts with DPT. Post-translationally, the attached glycosaminoglycan chain can be either chondroitin sulfate or dermatan sulfate depending upon the tissue of origin.

It localises to the secreted. The protein localises to the extracellular space. It is found in the extracellular matrix. May affect the rate of fibrils formation. The sequence is that of Decorin (DCN) from Oryctolagus cuniculus (Rabbit).